The chain runs to 264 residues: Zinc finger protein CG30 (264 aa).

The RING-type zinc-finger motif lies at 8–63 (CNICFSVAEIKNYFLQPIDRLTIIPVLELDTCKHQLCSMCIRKIRKRKKVPCPLCR).

It is found in the host nucleus. In terms of biological role, plays a role in the proper expression of late and very late genes. The protein is Zinc finger protein CG30 (CG30) of Autographa californica nuclear polyhedrosis virus (AcMNPV).